Consider the following 600-residue polypeptide: Adenine deaminase (600 aa).

Belongs to the metallo-dependent hydrolases superfamily. Adenine deaminase family. The cofactor is Mn(2+).

The catalysed reaction is adenine + H2O + H(+) = hypoxanthine + NH4(+). The sequence is that of Adenine deaminase from Bradyrhizobium sp. (strain BTAi1 / ATCC BAA-1182).